Reading from the N-terminus, the 96-residue chain is Aspartyl/glutamyl-tRNA(Asn/Gln) amidotransferase subunit C (96 aa).

This sequence belongs to the GatC family. As to quaternary structure, heterotrimer of A, B and C subunits.

It catalyses the reaction L-glutamyl-tRNA(Gln) + L-glutamine + ATP + H2O = L-glutaminyl-tRNA(Gln) + L-glutamate + ADP + phosphate + H(+). It carries out the reaction L-aspartyl-tRNA(Asn) + L-glutamine + ATP + H2O = L-asparaginyl-tRNA(Asn) + L-glutamate + ADP + phosphate + 2 H(+). Its function is as follows. Allows the formation of correctly charged Asn-tRNA(Asn) or Gln-tRNA(Gln) through the transamidation of misacylated Asp-tRNA(Asn) or Glu-tRNA(Gln) in organisms which lack either or both of asparaginyl-tRNA or glutaminyl-tRNA synthetases. The reaction takes place in the presence of glutamine and ATP through an activated phospho-Asp-tRNA(Asn) or phospho-Glu-tRNA(Gln). The polypeptide is Aspartyl/glutamyl-tRNA(Asn/Gln) amidotransferase subunit C (Exiguobacterium sibiricum (strain DSM 17290 / CCUG 55495 / CIP 109462 / JCM 13490 / 255-15)).